We begin with the raw amino-acid sequence, 84 residues long: MAKQIKRKRRPQIKINTFCRFTAAGVTKIDYKDIDILLKNIDESGKITPSRMTGTSAKFQRKLTTAIKRARFLALIPYTDKHKK.

It belongs to the bacterial ribosomal protein bS18 family. As to quaternary structure, part of the 30S ribosomal subunit. Forms a tight heterodimer with protein bS6.

Its function is as follows. Binds as a heterodimer with protein bS6 to the central domain of the 16S rRNA, where it helps stabilize the platform of the 30S subunit. The protein is Small ribosomal subunit protein bS18 of Vesicomyosocius okutanii subsp. Calyptogena okutanii (strain HA).